We begin with the raw amino-acid sequence, 311 residues long: Peptide methionine sulfoxide reductase MsrA/MsrB 2 (311 aa).

Residues methionine 1–asparagine 155 form a peptide methionine sulfoxide reductase A region. Cysteine 10 is a catalytic residue. The MsrB domain maps to aspartate 172 to lysine 295. Cysteine 284 acts as the Nucleophile in catalysis.

The protein in the N-terminal section; belongs to the MsrA Met sulfoxide reductase family. This sequence in the C-terminal section; belongs to the MsrB Met sulfoxide reductase family.

The enzyme catalyses L-methionyl-[protein] + [thioredoxin]-disulfide + H2O = L-methionyl-(S)-S-oxide-[protein] + [thioredoxin]-dithiol. It catalyses the reaction [thioredoxin]-disulfide + L-methionine + H2O = L-methionine (S)-S-oxide + [thioredoxin]-dithiol. It carries out the reaction L-methionyl-[protein] + [thioredoxin]-disulfide + H2O = L-methionyl-(R)-S-oxide-[protein] + [thioredoxin]-dithiol. Its function is as follows. Has an important function as a repair enzyme for proteins that have been inactivated by oxidation. Catalyzes the reversible oxidation-reduction of methionine sulfoxide in proteins to methionine. This chain is Peptide methionine sulfoxide reductase MsrA/MsrB 2 (msrAB2), found in Streptococcus pneumoniae serotype 4 (strain ATCC BAA-334 / TIGR4).